We begin with the raw amino-acid sequence, 356 residues long: S-adenosylmethionine:tRNA ribosyltransferase-isomerase (356 aa).

This sequence belongs to the QueA family. As to quaternary structure, monomer.

It is found in the cytoplasm. The enzyme catalyses 7-aminomethyl-7-carbaguanosine(34) in tRNA + S-adenosyl-L-methionine = epoxyqueuosine(34) in tRNA + adenine + L-methionine + 2 H(+). It participates in tRNA modification; tRNA-queuosine biosynthesis. Transfers and isomerizes the ribose moiety from AdoMet to the 7-aminomethyl group of 7-deazaguanine (preQ1-tRNA) to give epoxyqueuosine (oQ-tRNA). This Yersinia pestis protein is S-adenosylmethionine:tRNA ribosyltransferase-isomerase.